We begin with the raw amino-acid sequence, 497 residues long: Probable cytosol aminopeptidase (497 aa).

Positions 262 and 267 each coordinate Mn(2+). The active site involves Lys-274. 3 residues coordinate Mn(2+): Asp-285, Asp-344, and Glu-346. Residue Arg-348 is part of the active site.

This sequence belongs to the peptidase M17 family. Mn(2+) serves as cofactor.

The protein localises to the cytoplasm. The enzyme catalyses Release of an N-terminal amino acid, Xaa-|-Yaa-, in which Xaa is preferably Leu, but may be other amino acids including Pro although not Arg or Lys, and Yaa may be Pro. Amino acid amides and methyl esters are also readily hydrolyzed, but rates on arylamides are exceedingly low.. It catalyses the reaction Release of an N-terminal amino acid, preferentially leucine, but not glutamic or aspartic acids.. Presumably involved in the processing and regular turnover of intracellular proteins. Catalyzes the removal of unsubstituted N-terminal amino acids from various peptides. The protein is Probable cytosol aminopeptidase of Rhizobium etli (strain ATCC 51251 / DSM 11541 / JCM 21823 / NBRC 15573 / CFN 42).